A 51-amino-acid polypeptide reads, in one-letter code: Light-harvesting protein B-800/850 beta chain (51 aa).

At 2–23 (ADDANKVWPSGLTTAEAEELQK) the chain is on the cytoplasmic side. A helical transmembrane segment spans residues 24–46 (GLVDGTRVFGVIAVLAHILAYAY). His-40 is an a bacteriochlorophyll binding site. Topologically, residues 47–51 (TPWLH) are periplasmic.

It belongs to the antenna complex beta subunit family. An alpha/beta heterodimer conjugated to 3 bacteriochlorophyll molecules. The core complex is formed by different alpha and beta chains, binding bacteriochlorophyll molecules, and arranged most probably in tetrameric structures disposed around the reaction center. The non-pigmented gamma chains may constitute additional components.

The protein resides in the cell inner membrane. Functionally, antenna complexes are light-harvesting systems, which transfer the excitation energy to the reaction centers. This chain is Light-harvesting protein B-800/850 beta chain (pucB), found in Rubrivivax gelatinosus (Rhodocyclus gelatinosus).